The primary structure comprises 219 residues: MKNWTDVIGTEKAQPYFQHTLQQVHLARASGKTIYPPQEDVFNAFKYTAFEDVKVVILGQDPYHGPNQAHGLAFSVKPEVAIPPSLLNIYKELTQDISGFQMPSNGYLVKWAEQGVLLLNTVLTVERGMAHSHANLGWERFTDKVIAVLNEHREKLVFLLWGSHAQKKGQMIDRTRHLVLTAPHPSPLSAHRGFFGCRHFSKTNSYLESHGIKPIDWQI.

D61 serves as the catalytic Proton acceptor.

Belongs to the uracil-DNA glycosylase (UDG) superfamily. UNG family.

It is found in the cytoplasm. It catalyses the reaction Hydrolyzes single-stranded DNA or mismatched double-stranded DNA and polynucleotides, releasing free uracil.. Functionally, excises uracil residues from the DNA which can arise as a result of misincorporation of dUMP residues by DNA polymerase or due to deamination of cytosine. This Haemophilus influenzae (strain ATCC 51907 / DSM 11121 / KW20 / Rd) protein is Uracil-DNA glycosylase (ung).